Consider the following 246-residue polypeptide: Anionic trypsin-2 (246 aa).

A signal peptide spans 1–15 (MSALLILALVGAAVA). A propeptide spans 16–23 (FPVDDDDK) (activation peptide). The Peptidase S1 domain maps to 24–244 (IVGGYTCRES…YVDWIQNTIA (221 aa)). 6 disulfide bridges follow: C30/C160, C48/C64, C132/C233, C139/C206, C171/C185, and C196/C220. The active-site Charge relay system is H63. 4 residues coordinate Ca(2+): E75, N77, V80, and E85. D107 acts as the Charge relay system in catalysis. Residue S200 is the Charge relay system of the active site.

The protein belongs to the peptidase S1 family. Requires Ca(2+) as cofactor. As to expression, expressed in the pancreas, lung and kidney.

The protein localises to the secreted. Its subcellular location is the extracellular space. The enzyme catalyses Preferential cleavage: Arg-|-Xaa, Lys-|-Xaa.. This chain is Anionic trypsin-2 (Prss2), found in Mus musculus (Mouse).